The sequence spans 431 residues: Adenylosuccinate synthetase (431 aa).

GTP-binding positions include 13–19 (GDEGKGK) and 41–43 (GHT). Aspartate 14 serves as the catalytic Proton acceptor. Positions 14 and 41 each coordinate Mg(2+). Residues 14 to 17 (DEGK), 39 to 42 (NAGH), threonine 130, arginine 144, glutamine 225, threonine 240, and arginine 304 each bind IMP. Histidine 42 acts as the Proton donor in catalysis. 300–306 (ATTGRAR) serves as a coordination point for substrate. GTP-binding positions include arginine 306, 332–334 (KLD), and 414–416 (STG).

Belongs to the adenylosuccinate synthetase family. Homodimer. It depends on Mg(2+) as a cofactor.

It localises to the cytoplasm. It carries out the reaction IMP + L-aspartate + GTP = N(6)-(1,2-dicarboxyethyl)-AMP + GDP + phosphate + 2 H(+). The protein operates within purine metabolism; AMP biosynthesis via de novo pathway; AMP from IMP: step 1/2. Plays an important role in the de novo pathway of purine nucleotide biosynthesis. Catalyzes the first committed step in the biosynthesis of AMP from IMP. The polypeptide is Adenylosuccinate synthetase (Chromohalobacter salexigens (strain ATCC BAA-138 / DSM 3043 / CIP 106854 / NCIMB 13768 / 1H11)).